The following is a 502-amino-acid chain: ATP synthase subunit alpha (502 aa).

169 to 176 lines the ATP pocket; sequence GDRQTGKT.

This sequence belongs to the ATPase alpha/beta chains family. In terms of assembly, F-type ATPases have 2 components, CF(1) - the catalytic core - and CF(0) - the membrane proton channel. CF(1) has five subunits: alpha(3), beta(3), gamma(1), delta(1), epsilon(1). CF(0) has three main subunits: a(1), b(2) and c(9-12). The alpha and beta chains form an alternating ring which encloses part of the gamma chain. CF(1) is attached to CF(0) by a central stalk formed by the gamma and epsilon chains, while a peripheral stalk is formed by the delta and b chains.

Its subcellular location is the cell inner membrane. The enzyme catalyses ATP + H2O + 4 H(+)(in) = ADP + phosphate + 5 H(+)(out). Functionally, produces ATP from ADP in the presence of a proton gradient across the membrane. The alpha chain is a regulatory subunit. This is ATP synthase subunit alpha from Geotalea daltonii (strain DSM 22248 / JCM 15807 / FRC-32) (Geobacter daltonii).